A 957-amino-acid polypeptide reads, in one-letter code: Glycine dehydrogenase (decarboxylating) 2 (957 aa).

K707 is subject to N6-(pyridoxal phosphate)lysine.

This sequence belongs to the GcvP family. The glycine cleavage system is composed of four proteins: P, T, L and H. Requires pyridoxal 5'-phosphate as cofactor.

It carries out the reaction N(6)-[(R)-lipoyl]-L-lysyl-[glycine-cleavage complex H protein] + glycine + H(+) = N(6)-[(R)-S(8)-aminomethyldihydrolipoyl]-L-lysyl-[glycine-cleavage complex H protein] + CO2. In terms of biological role, the glycine cleavage system catalyzes the degradation of glycine. The P protein binds the alpha-amino group of glycine through its pyridoxal phosphate cofactor; CO(2) is released and the remaining methylamine moiety is then transferred to the lipoamide cofactor of the H protein. The protein is Glycine dehydrogenase (decarboxylating) 2 of Pseudomonas fluorescens (strain ATCC BAA-477 / NRRL B-23932 / Pf-5).